A 196-amino-acid chain; its full sequence is Pyridoxine/pyridoxamine 5'-phosphate oxidase (196 aa).

Lysine 49 is a substrate binding site. 2 residues coordinate FMN: lysine 66 and glutamine 88. 3 residues coordinate substrate: tyrosine 106, arginine 110, and serine 114. Residues 123–124 (QS) and tryptophan 168 contribute to the FMN site. 174-176 (RLH) lines the substrate pocket. Arginine 178 serves as a coordination point for FMN.

The protein belongs to the pyridoxamine 5'-phosphate oxidase family. As to quaternary structure, homodimer. Requires FMN as cofactor.

The enzyme catalyses pyridoxamine 5'-phosphate + O2 + H2O = pyridoxal 5'-phosphate + H2O2 + NH4(+). It catalyses the reaction pyridoxine 5'-phosphate + O2 = pyridoxal 5'-phosphate + H2O2. It participates in cofactor metabolism; pyridoxal 5'-phosphate salvage; pyridoxal 5'-phosphate from pyridoxamine 5'-phosphate: step 1/1. It functions in the pathway cofactor metabolism; pyridoxal 5'-phosphate salvage; pyridoxal 5'-phosphate from pyridoxine 5'-phosphate: step 1/1. In terms of biological role, catalyzes the oxidation of either pyridoxine 5'-phosphate (PNP) or pyridoxamine 5'-phosphate (PMP) into pyridoxal 5'-phosphate (PLP). The protein is Pyridoxine/pyridoxamine 5'-phosphate oxidase of Bdellovibrio bacteriovorus (strain ATCC 15356 / DSM 50701 / NCIMB 9529 / HD100).